Here is a 466-residue protein sequence, read N- to C-terminus: 3-isopropylmalate dehydratase large subunit (466 aa).

[4Fe-4S] cluster-binding residues include Cys347, Cys407, and Cys410.

Belongs to the aconitase/IPM isomerase family. LeuC type 1 subfamily. Heterodimer of LeuC and LeuD. It depends on [4Fe-4S] cluster as a cofactor.

It carries out the reaction (2R,3S)-3-isopropylmalate = (2S)-2-isopropylmalate. The protein operates within amino-acid biosynthesis; L-leucine biosynthesis; L-leucine from 3-methyl-2-oxobutanoate: step 2/4. Functionally, catalyzes the isomerization between 2-isopropylmalate and 3-isopropylmalate, via the formation of 2-isopropylmaleate. The sequence is that of 3-isopropylmalate dehydratase large subunit from Shewanella halifaxensis (strain HAW-EB4).